Here is a 266-residue protein sequence, read N- to C-terminus: Putative zinc finger protein 034R (266 aa).

The tract at residues S84–P176 is disordered. A compositionally biased stretch (basic and acidic residues) spans S88–P100. Composition is skewed to polar residues over residues K105–L119 and G160–P176. The C3H1-type zinc-finger motif lies at C180–G192.

Belongs to the IIV-6 077L family.

The protein is Putative zinc finger protein 034R of Aedes vexans (Inland floodwater mosquito).